The sequence spans 64 residues: Alpha-mammal toxin Lqh2 (64 aa).

An LCN-type CS-alpha/beta domain is found at 2 to 64 (KDGYIVDDVN…VRTKGPGRCR (63 aa)). 4 cysteine pairs are disulfide-bonded: Cys-12/Cys-63, Cys-16/Cys-36, Cys-22/Cys-46, and Cys-26/Cys-48. Arg-64 carries the arginine amide modification.

This sequence belongs to the long (4 C-C) scorpion toxin superfamily. Sodium channel inhibitor family. Alpha subfamily. Expressed by the venom gland.

The protein resides in the secreted. Its function is as follows. Alpha toxins bind voltage-independently at site-3 of sodium channels (Nav) and inhibit the inactivation of the activated channels, thereby blocking neuronal transmission. The dissociation is voltage-dependent. Is active on mammals and competes for alpha-toxins binding on both mammalian and cockroach sodium channels. The chain is Alpha-mammal toxin Lqh2 from Leiurus hebraeus (Hebrew deathstalker scorpion).